Here is a 1101-residue protein sequence, read N- to C-terminus: Rho guanine nucleotide exchange factor gef2 (1101 aa).

Positions 203–222 (EDSRKKTSSPSPSFASSKDA) are disordered. A compositionally biased stretch (low complexity) spans 210 to 219 (SSPSPSFASS). The DH domain occupies 230 to 428 (KKKSLLIEMM…KNIAEMPTVD (199 aa)). A phosphoserine mark is found at serine 736 and serine 977.

It localises to the cytoplasm. It is found in the cytoskeleton. The protein resides in the microtubule organizing center. Its subcellular location is the spindle pole body. Functionally, has a role in the control of cell polarity and cytokinesis. Involved in bipolar growth and septum formation. This Schizosaccharomyces pombe (strain 972 / ATCC 24843) (Fission yeast) protein is Rho guanine nucleotide exchange factor gef2 (gef2).